Consider the following 1177-residue polypeptide: Putative ATP-dependent RNA helicase TDRD12 (1177 aa).

The Tudor 1 domain maps to 56-118; that stretch reads TLEEGQVCVV…RVVVESFMQL (63 aa). Positions 447 to 635 constitute a Helicase ATP-binding domain; the sequence is WPPIARGCDV…KEFMNDPYIV (189 aa). 460–467 is a binding site for ATP; sequence SHCESNPL. The DEAH box motif lies at 574–577; that stretch reads DEVE. The 100-residue stretch at 900–999 folds into the Tudor 2 domain; it reads IVDKHMDLYA…HTLPPQAVEF (100 aa). Residues 1098–1177 are disordered; that stretch reads EESLSQTPPR…VFKRWLSSNR (80 aa). Residues 1100–1115 are compositionally biased toward polar residues; the sequence is SLSQTPPRVTGTSPAQ.

In terms of assembly, component of a mRNP complex containing PIWIL2, TDRD1 and piRNAs. Component of the PET complex, at least composed of EXD1, PIWIL2, TDRD12 and piRNAs.

It carries out the reaction ATP + H2O = ADP + phosphate + H(+). Functionally, probable ATP-binding RNA helicase required during spermatogenesis to repress transposable elements and preventing their mobilization, which is essential for the germline integrity. Acts via the piRNA metabolic process, which mediates the repression of transposable elements during meiosis by forming complexes composed of piRNAs and Piwi proteins and governs the methylation and subsequent repression of transposons. Involved in the secondary piRNAs metabolic process. Acts via the PET complex, a multiprotein complex required during the secondary piRNAs metabolic process for the PIWIL2 slicing-triggered loading of PIWIL4 piRNAs. In Homo sapiens (Human), this protein is Putative ATP-dependent RNA helicase TDRD12 (TDRD12).